A 473-amino-acid chain; its full sequence is Cannabinoid receptor 1 (473 aa).

The Extracellular segment spans residues 1-121; sequence MKSILDGLAD…LNPSQQLAIA (121 aa). The tract at residues 2–23 is required for mitochondrial localization; that stretch reads KSILDGLADTTFRTITTDLLYV. Asparagine 78 and asparagine 84 each carry an N-linked (GlcNAc...) asparagine glycan. The helical transmembrane segment at 122-142 threads the bilayer; that stretch reads VLSLTLGTFTVLENLLVLCVI. Residues 143 to 155 are Cytoplasmic-facing; sequence LHSRSLRCRPSYH. Residues 156-176 form a helical membrane-spanning segment; it reads FIGSLAVADLLGSVIFVYSFV. The Extracellular portion of the chain corresponds to 177–188; that stretch reads DFHVFHRKDSPN. The helical transmembrane segment at 189–209 threads the bilayer; the sequence is VFLFKLGGVTASFTASVGSLF. Residues 210–233 lie on the Cytoplasmic side of the membrane; it reads LTAIDRYISIHRPLAYKRIVTRPK. A helical transmembrane segment spans residues 234–254; it reads AVVAFCLMWTIAIVIAVLPLL. At 255 to 278 the chain is on the extracellular side; it reads GWNCKKLQSVCSDIFPLIDETYLM. Residues 279–299 form a helical membrane-spanning segment; sequence FWIGVTSVLLLFIVYAYMYIL. Residues 300–345 lie on the Cytoplasmic side of the membrane; that stretch reads WKAHSHAVRMIQRGTQKSIIIHTSEDGKVQVTRPDQARMDIRLAKT. The chain crosses the membrane as a helical span at residues 346 to 366; that stretch reads LVLILVVLIICWGPLLAIMVY. The Extracellular segment spans residues 367 to 378; the sequence is DVFGKMNKLIKT. A helical membrane pass occupies residues 379 to 399; it reads VFAFCSMLCLLNSTVNPIIYA. The Cytoplasmic portion of the chain corresponds to 400–473; the sequence is LRSKDLRHAF…VSTDTSAEAL (74 aa). The S-palmitoyl cysteine moiety is linked to residue cysteine 416. Phosphoserine occurs at positions 426 and 430.

Belongs to the G-protein coupled receptor 1 family. As to quaternary structure, interacts (via C-terminus) with CNRIP1. Associates with G protein alpha subunits, including G(i) alpha-1/GNAI1, G(i) alpha-3/GNAI3 and G(o)-alpha/GNAO1; palmitoylation is important for interaction with GNAI3 and GNAO1. Palmitoylation at Cys-416 is important for recruitment at both plasma membrane and lipid rafts and association with G protein alpha subunits. As to expression, expressed in brain neurons (at protein level). Detected throughout the striatum, cortex and hippocampus, with highest levels in the lateral striatum. In rostral brain regions, high expression levels in the dorsal lateral striatum, while in the caudal brain regions, high levels are observed in the ventral lateral striatum. Expressed in neurons. In the hypothalamus, expressed in both GABAergic and glutamatergic presynaptic terminals of POMC neurons (at protein level). Expressed in striated muscles, including skeletal muscles (gastrocnemius and rectus abdominis) and myocardium (at protein level). Expressed in the liver, with highest levels in Kupffer cells and lower levels in endothelial cells as well as hepatocytes, particularly in perivascular areas (at protein level). The hepatic expression level is up-regulated in obese mice compared to lean animals.

The protein localises to the cell membrane. The protein resides in the mitochondrion outer membrane. It is found in the cell projection. It localises to the axon. Its subcellular location is the presynapse. Hemopressin, a peptide derived from hemoglobin subunit alpha (HBA1 and/or HBA2), acts as an antagonist peptide: hemopressin-binding efficiently blocks cannabinoid receptor CNR1 and subsequent signaling. Its function is as follows. G-protein coupled receptor for cannabinoids, including endocannabinoids (eCBs), such as N-arachidonoylethanolamide (also called anandamide or AEA) and 2-arachidonoylglycerol (2-AG). Mediates many cannabinoid-induced effects, acting, among others, on food intake, memory loss, gastrointestinal motility, catalepsy, ambulatory activity, anxiety, chronic pain. Signaling typically involves reduction in cyclic AMP. In the hypothalamus, may have a dual effect on mitochondrial respiration depending upon the agonist dose and possibly upon the cell type. Increases respiration at low doses, while decreases respiration at high doses. At high doses, CNR1 signal transduction involves G-protein alpha-i protein activation and subsequent inhibition of mitochondrial soluble adenylate cyclase, decrease in cyclic AMP concentration, inhibition of protein kinase A (PKA)-dependent phosphorylation of specific subunits of the mitochondrial electron transport system, including NDUFS2. In the hypothalamus, inhibits leptin-induced reactive oxygen species (ROS) formation and mediates cannabinoid-induced increase in SREBF1 and FASN gene expression. In response to cannabinoids, drives the release of orexigenic beta-endorphin, but not that of melanocyte-stimulating hormone alpha/alpha-MSH, from hypothalamic POMC neurons, hence promoting food intake. In the hippocampus, regulates cellular respiration and energy production in response to cannabinoids. Involved in cannabinoid-dependent depolarization-induced suppression of inhibition (DSI), a process in which depolarization of CA1 postsynaptic pyramidal neurons mobilizes eCBs, which retrogradely activate presynaptic CB1 receptors, transiently decreasing GABAergic inhibitory neurotransmission. Also reduces excitatory synaptic transmission. In superior cervical ganglions and cerebral vascular smooth muscle cells, inhibits voltage-gated Ca(2+) channels in a constitutive, as well as agonist-dependent manner. In cerebral vascular smooth muscle cells, cannabinoid-induced inhibition of voltage-gated Ca(2+) channels leads to vasodilation and decreased vascular tone. Induces leptin production in adipocytes and reduces LRP2-mediated leptin clearance in the kidney, hence participating in hyperleptinemia. In adipose tissue, CNR1 signaling leads to increased expression of SREBF1, ACACA and FASN genes. In the liver, activation by endocannabinoids leads to increased de novo lipogenesis and reduced fatty acid catabolism, associated with increased expression of SREBF1/SREBP-1, GCK, ACACA, ACACB and FASN genes. May also affect de novo cholesterol synthesis and HDL-cholesteryl ether uptake. Peripherally modulates energy metabolism. In high carbohydrate diet-induced obesity, may decrease the expression of mitochondrial dihydrolipoyl dehydrogenase/DLD in striated muscles, as well as that of selected glucose/ pyruvate metabolic enzymes, hence affecting energy expenditure through mitochondrial metabolism. In response to cannabinoid anandamide, elicits a pro-inflammatory response in macrophages, which involves NLRP3 inflammasome activation and IL1B and IL18 secretion. In macrophages infiltrating pancreatic islets, this process may participate in the progression of type-2 diabetes and associated loss of pancreatic beta-cells. This chain is Cannabinoid receptor 1 (Cnr1), found in Mus musculus (Mouse).